The primary structure comprises 150 residues: Spore germination protein GerT (150 aa).

The protein resides in the spore coat. Involved in spore germination. This Bacillus licheniformis (strain ATCC 14580 / DSM 13 / JCM 2505 / CCUG 7422 / NBRC 12200 / NCIMB 9375 / NCTC 10341 / NRRL NRS-1264 / Gibson 46) protein is Spore germination protein GerT (gerT).